The chain runs to 164 residues: Vasopressin-neurophysin 2-copeptin (164 aa).

The N-terminal stretch at 1 to 19 (MPDTMLPACFLGLLAFSSA) is a signal peptide. Cys20 and Cys25 are oxidised to a cystine. Gly28 is subject to Glycine amide. 7 cysteine pairs are disulfide-bonded: Cys41–Cys85, Cys44–Cys58, Cys52–Cys75, Cys59–Cys65, Cys92–Cys104, Cys98–Cys116, and Cys105–Cys110. An N-linked (GlcNAc...) asparagine glycan is attached at Asn131.

This sequence belongs to the vasopressin/oxytocin family. Interacts with vasopressin receptors V1bR/AVPR1B (Ki=85 pM), V1aR/AVPR1A (Ki=0.6 nM) and V2R/AVPR2 (Ki=4.9 nM). Interacts with oxytocin receptor (OXTR) (Ki=110 nM). In terms of assembly, (Microbial infection) May interact with SARS coronavirus-2/SARS-CoV-2; they may form a complex with secreted ACE2.

The protein resides in the secreted. Specifically binds vasopressin. Functionally, has a direct antidiuretic action on the kidney, it also causes vasoconstriction of the peripheral vessels. Acts by binding to vasopressin receptors (V1bR/AVPR1B, V1aR/AVPR1A, and V2R/AVPR2). This chain is Vasopressin-neurophysin 2-copeptin (AVP), found in Homo sapiens (Human).